The chain runs to 310 residues: RING-H2 finger protein ATL60 (310 aa).

The helical transmembrane segment at 24–44 (VLLFSIVSIFTGILFLLLLHL) threads the bilayer. The RING-type; atypical zinc-finger motif lies at 120–162 (CAVCLSDLVDGDKARVLPRCNHGFHVDCIDMWFQSHSTCPLCR). 2 disordered regions span residues 170–201 (DTTH…QDQS) and 240–260 (GNFA…RSQE). Over residues 179-201 (LPQNQNFESGHSTNQHNPSQDQS) the composition is skewed to polar residues.

Belongs to the RING-type zinc finger family. ATL subfamily.

The protein localises to the membrane. It catalyses the reaction S-ubiquitinyl-[E2 ubiquitin-conjugating enzyme]-L-cysteine + [acceptor protein]-L-lysine = [E2 ubiquitin-conjugating enzyme]-L-cysteine + N(6)-ubiquitinyl-[acceptor protein]-L-lysine.. It functions in the pathway protein modification; protein ubiquitination. The sequence is that of RING-H2 finger protein ATL60 (ATL60) from Arabidopsis thaliana (Mouse-ear cress).